Reading from the N-terminus, the 187-residue chain is Large ribosomal subunit protein bL25 (187 aa).

Belongs to the bacterial ribosomal protein bL25 family. CTC subfamily. Part of the 50S ribosomal subunit; part of the 5S rRNA/L5/L18/L25 subcomplex. Contacts the 5S rRNA. Binds to the 5S rRNA independently of L5 and L18.

Its function is as follows. This is one of the proteins that binds to the 5S RNA in the ribosome where it forms part of the central protuberance. The sequence is that of Large ribosomal subunit protein bL25 from Tropheryma whipplei (strain TW08/27) (Whipple's bacillus).